The primary structure comprises 122 residues: Bet1-like SNARE 1-1 (122 aa).

The Cytoplasmic portion of the chain corresponds to 1–103 (MNPRREPRGG…VFETKSSRRM (103 aa)). One can recognise a t-SNARE coiled-coil homology domain in the interval 32–94 (EINEHENERA…SGTMDRFKTV (63 aa)). Ser-56 is modified (phosphoserine). The helical; Anchor for type IV membrane protein transmembrane segment at 104–121 (LTLVASFVGLFLVIYYLT) threads the bilayer. Residue Arg-122 is a topological domain, vesicular.

The protein belongs to the BET1 family.

It is found in the golgi apparatus membrane. The protein resides in the endoplasmic reticulum membrane. Required for vesicular transport from the ER to the Golgi complex. Functions as a SNARE associated with ER-derived vesicles. This chain is Bet1-like SNARE 1-1 (BET11), found in Arabidopsis thaliana (Mouse-ear cress).